Consider the following 726-residue polypeptide: PTS system glucose-specific EIICBA component (726 aa).

The region spanning 1-453 is the PTS EIIC type-1 domain; it reads MMKDTFKNVL…FNYATPGRNG (453 aa). The next 9 helical transmembrane spans lie at 18 to 38, 62 to 82, 90 to 110, 139 to 159, 184 to 204, 311 to 331, 344 to 364, 365 to 385, and 419 to 439; these read FGKALMVVIAVMPAAGLMISI, IGWGVIGNLHILFALAIGGSW, AFAAGLAFILINRITGTIFGV, VLEAPALNMGVFVGIISGFVG, FVPFVVILRSAIAAILLAAFW, FKVGQMIGSFGILMGVIVAIY, GMMIATALATFLTGVTEPIEY, MFMFIATPMYLVYSLVQGAAF, and IVNFVWVTVLFAVIMYFIANF. Residues 473-555 enclose the PTS EIIB type-1 domain; it reads GSQAVNIINL…QDILDSGEII (83 aa). Residue cysteine 495 is the Phosphocysteine intermediate; for EIIB activity of the active site. One can recognise a PTS EIIA type-1 domain in the interval 596-700; sequence DPVFAQKMMG…ETSTVVVFTN (105 aa). Histidine 648 functions as the Tele-phosphohistidine intermediate; for EIIA activity in the catalytic mechanism.

It localises to the cell membrane. It carries out the reaction N(pros)-phospho-L-histidyl-[protein] + D-glucose(out) = D-glucose 6-phosphate(in) + L-histidyl-[protein]. In terms of biological role, the phosphoenolpyruvate-dependent sugar phosphotransferase system (sugar PTS), a major carbohydrate active transport system, catalyzes the phosphorylation of incoming sugar substrates concomitantly with their translocation across the cell membrane. This system is involved in glucose transport. In Streptococcus pneumoniae serotype 4 (strain ATCC BAA-334 / TIGR4), this protein is PTS system glucose-specific EIICBA component (exp5).